Here is a 56-residue protein sequence, read N- to C-terminus: Large ribosomal subunit protein bL32 (56 aa).

The interval 1–34 (MAVQQNKKSRSKRGMRRSHDSLSTAQLSVDATSG) is disordered. Residues 7-16 (KKSRSKRGMR) are compositionally biased toward basic residues. The span at 21-31 (SLSTAQLSVDA) shows a compositional bias: polar residues.

Belongs to the bacterial ribosomal protein bL32 family.

This chain is Large ribosomal subunit protein bL32, found in Shewanella frigidimarina (strain NCIMB 400).